Consider the following 533-residue polypeptide: Probable RNA-binding protein 46 (533 aa).

RRM domains are found at residues 61 to 139, 141 to 223, and 236 to 308; these read CEVF…VSLD, CRLF…WADP, and KVLY…LAKP.

As to quaternary structure, interacts with YTHDC2, MEIOC, MOV10, CNOT6L, DDX4, UPF1 and PABPC1.

It is found in the cytoplasm. Essential for male and female fertility, playing a crucial role in regulating germ cell development by ensuring the proper progression of meiosis prophase I. Regulates mitotic-to-meiotic transition in spermatogenesis by forming a complex with MEIOC and YTHDC2 which recognizes and down-regulates mitotic transcripts for a successful meiotic entry. Required for normal synaptonemal complex formation during meiosis, binding meiotic cohesin subunit mRNAs containing GCCUAU/GUUCGA motifs in their 3'UTRs regions and positively regulating their translation. Required for spermatogonial differentiation in both developing and adult testis. This chain is Probable RNA-binding protein 46 (RBM46), found in Homo sapiens (Human).